The sequence spans 637 residues: Coiled-coil domain-containing protein 22 homolog (637 aa).

Coiled coils occupy residues 322–489 and 608–637; these read ETEI…YKQA and SDRVVQDLKNIKSENQSLIKQIKTLIETKN.

It belongs to the CCDC22 family.

In Dictyostelium discoideum (Social amoeba), this protein is Coiled-coil domain-containing protein 22 homolog.